A 744-amino-acid polypeptide reads, in one-letter code: Integrator complex subunit 11 homolog (744 aa).

H67, H69, D71, H72, H156, and D177 together coordinate Zn(2+). Positions 67-72 (HFHLDH) match the HXHXDH motif motif. E202 is a catalytic residue. H425 contributes to the Zn(2+) binding site. The interval 626-669 (NNNTSDDNNNNNNNNNNNNNNNNNNNNNNNNNNNNNNNNNNNNN) is disordered.

Belongs to the metallo-beta-lactamase superfamily. RNA-metabolizing metallo-beta-lactamase-like family. INTS11 subfamily. In terms of assembly, component of the Integrator complex. The core complex associates with protein phosphatase 2A subunits, to form the Integrator-PP2A (INTAC) complex. The cofactor is Zn(2+).

The protein localises to the nucleus. It localises to the cytoplasm. Functionally, RNA endonuclease component of the integrator complex, a multiprotein complex that terminates RNA polymerase II (Pol II) transcription in the promoter-proximal region of genes. The integrator complex provides a quality checkpoint during transcription elongation by driving premature transcription termination of transcripts that are unfavorably configured for transcriptional elongation: the complex terminates transcription by (1) catalyzing dephosphorylation of the C-terminal domain (CTD) of Pol II subunit polr2a, (2) degrading the exiting nascent RNA transcript via endonuclease activity and (3) promoting the release of Pol II from bound DNA. The integrator complex is also involved in terminating the synthesis of non-coding Pol II transcripts, such as enhancer RNAs (eRNAs), small nuclear RNAs (snRNAs), telomerase RNAs and long non-coding RNAs (lncRNAs). Within the integrator complex, INTS11 constitutes the RNA endonuclease subunit that degrades exiting nascent RNA transcripts. This is Integrator complex subunit 11 homolog (ints11) from Dictyostelium discoideum (Social amoeba).